The sequence spans 132 residues: Ribosome-binding factor A (132 aa).

It belongs to the RbfA family. Monomer. Binds 30S ribosomal subunits, but not 50S ribosomal subunits or 70S ribosomes.

It is found in the cytoplasm. Functionally, one of several proteins that assist in the late maturation steps of the functional core of the 30S ribosomal subunit. Associates with free 30S ribosomal subunits (but not with 30S subunits that are part of 70S ribosomes or polysomes). Required for efficient processing of 16S rRNA. May interact with the 5'-terminal helix region of 16S rRNA. The protein is Ribosome-binding factor A of Bordetella avium (strain 197N).